A 424-amino-acid polypeptide reads, in one-letter code: UPF0597 protein Shewana3_2972 (424 aa).

It belongs to the UPF0597 family.

This Shewanella sp. (strain ANA-3) protein is UPF0597 protein Shewana3_2972.